Consider the following 375-residue polypeptide: Cobalt-precorrin-5B C(1)-methyltransferase (375 aa).

Belongs to the CbiD family.

The enzyme catalyses Co-precorrin-5B + S-adenosyl-L-methionine = Co-precorrin-6A + S-adenosyl-L-homocysteine. It participates in cofactor biosynthesis; adenosylcobalamin biosynthesis; cob(II)yrinate a,c-diamide from sirohydrochlorin (anaerobic route): step 6/10. Functionally, catalyzes the methylation of C-1 in cobalt-precorrin-5B to form cobalt-precorrin-6A. In Paracidovorax citrulli (strain AAC00-1) (Acidovorax citrulli), this protein is Cobalt-precorrin-5B C(1)-methyltransferase.